Here is a 331-residue protein sequence, read N- to C-terminus: tRNA-cytidine(32) 2-sulfurtransferase (331 aa).

Positions 1–33 (MNAPHMNDTAADAATLDDAAAPAGRPALTRREQ) are disordered. Over residues 8-23 (DTAADAATLDDAAAPA) the composition is skewed to low complexity. Positions 71-76 (SGGKDS) match the PP-loop motif motif. Residues Cys-146, Cys-149, and Cys-237 each contribute to the [4Fe-4S] cluster site.

Belongs to the TtcA family. As to quaternary structure, homodimer. It depends on Mg(2+) as a cofactor. [4Fe-4S] cluster serves as cofactor.

The protein localises to the cytoplasm. The enzyme catalyses cytidine(32) in tRNA + S-sulfanyl-L-cysteinyl-[cysteine desulfurase] + AH2 + ATP = 2-thiocytidine(32) in tRNA + L-cysteinyl-[cysteine desulfurase] + A + AMP + diphosphate + H(+). Its pathway is tRNA modification. Catalyzes the ATP-dependent 2-thiolation of cytidine in position 32 of tRNA, to form 2-thiocytidine (s(2)C32). The sulfur atoms are provided by the cysteine/cysteine desulfurase (IscS) system. In Burkholderia orbicola (strain MC0-3), this protein is tRNA-cytidine(32) 2-sulfurtransferase.